Reading from the N-terminus, the 197-residue chain is Predicted GPI-anchored protein 34 (197 aa).

Residues 1–20 (MKFTSLICSSILLIIPTVMA) form the signal peptide. Residues Asn-110, Asn-114, and Asn-152 are each glycosylated (N-linked (GlcNAc...) asparagine). The GPI-anchor amidated glycine moiety is linked to residue Gly-169. Residues 170–197 (AAAMAGPVPILTNSIFTAGLLALAAVLL) constitute a propeptide, removed in mature form.

It localises to the cell membrane. Its function is as follows. Predicted GPI-anchored protein which may have a role during host infection. The sequence is that of Predicted GPI-anchored protein 34 (PGA34) from Candida albicans (strain SC5314 / ATCC MYA-2876) (Yeast).